The chain runs to 756 residues: Cilium assembly protein DZIP1L (756 aa).

The interval 1–20 (MLGQFSPGEPYTTSLSSTPP) is disordered. Low complexity predominate over residues 10 to 19 (PYTTSLSSTP). The stretch at 108 to 158 (DFLSSQLAGLEERLQAATSLVQQGEGQRAELEKSLQETKQENRRRKQLIAT) forms a coiled coil. The segment at 171–194 (HKCQFCEKSFVNYSYLQAHVQRRH) adopts a C2H2-type zinc-finger fold. Basic and acidic residues-rich tracts occupy residues 193 to 202 (RHPEVTDAEK), 237 to 262 (NLRR…ERWK), 319 to 335 (DPEK…LRER), and 344 to 365 (RRKF…KSEN). 6 disordered regions span residues 193 to 212 (RHPE…EEME), 233 to 262 (QQAD…ERWK), 310 to 365 (NNAS…KSEN), 409 to 466 (KIKK…MRES), 531 to 626 (VKSL…AYIT), and 693 to 756 (IKTP…GTSA). Coiled coils occupy residues 196–283 (EVTD…FLQE) and 321–416 (EKEM…LSAT). Residues 534–558 (LQKSSGKPTPNTLKQRGKKTSTPLN) show a composition bias toward polar residues. Residues 560 to 578 (KSLRFRQDSKASDRREKSQ) are compositionally biased toward basic and acidic residues. Positions 586 to 598 (TPTPRSKAPPPNQ) are enriched in pro residues.

The protein belongs to the DZIP C2H2-type zinc-finger protein family.

The protein localises to the cytoplasm. It is found in the cytoskeleton. The protein resides in the cilium basal body. Its subcellular location is the microtubule organizing center. It localises to the centrosome. The protein localises to the centriole. Its function is as follows. Involved in primary cilium formation. Probably acts as a transition zone protein required for localization of PKD1/PC1 and PKD2/PC2 to the ciliary membrane. In Danio rerio (Zebrafish), this protein is Cilium assembly protein DZIP1L (dzip1l).